Consider the following 148-residue polypeptide: Hut operon positive regulatory protein (148 aa).

Belongs to the HutP family. As to quaternary structure, homohexamer.

Antiterminator that binds to cis-acting regulatory sequences on the mRNA in the presence of histidine, thereby suppressing transcription termination and activating the hut operon for histidine utilization. This chain is Hut operon positive regulatory protein, found in Bacillus velezensis (strain DSM 23117 / BGSC 10A6 / LMG 26770 / FZB42) (Bacillus amyloliquefaciens subsp. plantarum).